The chain runs to 436 residues: ATP-dependent protease ATPase subunit HslU (436 aa).

Residues I19, 61-65, D249, E314, and R386 each bind ATP; that span reads GVGKT.

Belongs to the ClpX chaperone family. HslU subfamily. As to quaternary structure, a double ring-shaped homohexamer of HslV is capped on each side by a ring-shaped HslU homohexamer. The assembly of the HslU/HslV complex is dependent on binding of ATP.

The protein localises to the cytoplasm. ATPase subunit of a proteasome-like degradation complex; this subunit has chaperone activity. The binding of ATP and its subsequent hydrolysis by HslU are essential for unfolding of protein substrates subsequently hydrolyzed by HslV. HslU recognizes the N-terminal part of its protein substrates and unfolds these before they are guided to HslV for hydrolysis. This Bartonella henselae (strain ATCC 49882 / DSM 28221 / CCUG 30454 / Houston 1) (Rochalimaea henselae) protein is ATP-dependent protease ATPase subunit HslU.